The following is a 404-amino-acid chain: Argininosuccinate synthase (404 aa).

Alanine 9 to serine 17 serves as a coordination point for ATP. Tyrosine 86 lines the L-citrulline pocket. Residue glycine 116 coordinates ATP. 3 residues coordinate L-aspartate: threonine 118, asparagine 122, and aspartate 123. Asparagine 122 contacts L-citrulline. The L-citrulline site is built by arginine 126, serine 174, serine 183, glutamate 259, and tyrosine 271.

It belongs to the argininosuccinate synthase family. Type 1 subfamily. As to quaternary structure, homotetramer.

Its subcellular location is the cytoplasm. It carries out the reaction L-citrulline + L-aspartate + ATP = 2-(N(omega)-L-arginino)succinate + AMP + diphosphate + H(+). It functions in the pathway amino-acid biosynthesis; L-arginine biosynthesis; L-arginine from L-ornithine and carbamoyl phosphate: step 2/3. The polypeptide is Argininosuccinate synthase (Listeria innocua serovar 6a (strain ATCC BAA-680 / CLIP 11262)).